Here is a 274-residue protein sequence, read N- to C-terminus: Elongation factor Ts (274 aa).

The interval threonine 82 to valine 85 is involved in Mg(2+) ion dislocation from EF-Tu.

Belongs to the EF-Ts family.

The protein localises to the cytoplasm. Its function is as follows. Associates with the EF-Tu.GDP complex and induces the exchange of GDP to GTP. It remains bound to the aminoacyl-tRNA.EF-Tu.GTP complex up to the GTP hydrolysis stage on the ribosome. The chain is Elongation factor Ts from Christiangramia forsetii (strain DSM 17595 / CGMCC 1.15422 / KT0803) (Gramella forsetii).